A 114-amino-acid polypeptide reads, in one-letter code: FK506-binding protein 1 (114 aa).

Residues 26 to 114 (GDLVTIHYTG…IFDVELLKVN (89 aa)) enclose the PPIase FKBP-type domain.

It belongs to the FKBP-type PPIase family. FKBP1 subfamily.

It localises to the cytoplasm. It catalyses the reaction [protein]-peptidylproline (omega=180) = [protein]-peptidylproline (omega=0). With respect to regulation, inhibited by both FK506 and rapamycin. PPIases accelerate the folding of proteins. It catalyzes the cis-trans isomerization of proline imidic peptide bonds in oligopeptides. The chain is FK506-binding protein 1 (FPR1) from Candida glabrata (strain ATCC 2001 / BCRC 20586 / JCM 3761 / NBRC 0622 / NRRL Y-65 / CBS 138) (Yeast).